The sequence spans 462 residues: Beta-glucosidase 1A (462 aa).

Gln-20, His-123, and Asn-169 together coordinate substrate. Catalysis depends on Glu-170, which acts as the Proton donor. Tyr-301 lines the substrate pocket. Glu-365 acts as the Nucleophile in catalysis. Substrate-binding positions include Trp-415 and 422-423; that span reads EW.

It belongs to the glycosyl hydrolase 1 family.

The catalysed reaction is Hydrolysis of terminal, non-reducing beta-D-glucosyl residues with release of beta-D-glucose.. Plays an important role in cellulose degradation. Shows hydrolytic activity against several glycosidic compounds. The polypeptide is Beta-glucosidase 1A (Phanerodontia chrysosporium (White-rot fungus)).